Consider the following 172-residue polypeptide: Shikimate kinase (172 aa).

14 to 19 (GAGKST) is a binding site for ATP. Ser18 serves as a coordination point for Mg(2+). Residues Asp36, Arg60, and Gly82 each contribute to the substrate site. Arg120 serves as a coordination point for ATP. Residue Arg140 participates in substrate binding. Gln157 lines the ATP pocket.

It belongs to the shikimate kinase family. As to quaternary structure, monomer. Mg(2+) is required as a cofactor.

It is found in the cytoplasm. It catalyses the reaction shikimate + ATP = 3-phosphoshikimate + ADP + H(+). Its pathway is metabolic intermediate biosynthesis; chorismate biosynthesis; chorismate from D-erythrose 4-phosphate and phosphoenolpyruvate: step 5/7. Its function is as follows. Catalyzes the specific phosphorylation of the 3-hydroxyl group of shikimic acid using ATP as a cosubstrate. This chain is Shikimate kinase, found in Pseudoalteromonas translucida (strain TAC 125).